A 118-amino-acid polypeptide reads, in one-letter code: UPF0329 protein ECU03_0030/ECU05_0040/ECU06_0010/ECU06_1710/ECU11_0010 (118 aa).

It belongs to the UPF0329 family.

In Encephalitozoon cuniculi (strain GB-M1) (Microsporidian parasite), this protein is UPF0329 protein ECU03_0030/ECU05_0040/ECU06_0010/ECU06_1710/ECU11_0010.